The following is a 122-amino-acid chain: RxLR effector protein Avh52 (122 aa).

Residues 1-21 (MRLTSILVLVIAATFHTTGTA) form the signal peptide. The short motif at 50–68 (RLLRRVEKDKVDYEQDEQR) is the RxLR-dEER element. The tract at residues 69–86 (SFGALKDAVKKLNPVTAV) is TAP1-binding. The interval 87–98 (KKFFKQRARRKK) is nuclear localization signal (NLS).

The protein belongs to the RxLR effector family. In terms of assembly, interacts with host acetyl transferase TAP1.

Its subcellular location is the secreted. It localises to the host nucleus. Effector that suppresses plant defense responses during the early stages of pathogen infection. Suppresses cell death induced by effectors and PAMPs in plant hosts. Interacts with host acetyltransferase TAP1 and causes TAP1 relocation into the nucleus where it acetylates histones H2A and H3 during early infection, thereby promoting susceptibility of host plant to P.sojae. The protein is RxLR effector protein Avh52 of Phytophthora sojae (Soybean stem and root rot agent).